Here is a 91-residue protein sequence, read N- to C-terminus: Small ribosomal subunit protein uS19 (91 aa).

Belongs to the universal ribosomal protein uS19 family.

In terms of biological role, protein S19 forms a complex with S13 that binds strongly to the 16S ribosomal RNA. In Ectopseudomonas mendocina (strain ymp) (Pseudomonas mendocina), this protein is Small ribosomal subunit protein uS19.